A 417-amino-acid chain; its full sequence is UPF0761 membrane protein CV_0810 (417 aa).

The next 7 membrane-spanning stretches (helical) occupy residues 52–72 (LLAL…FPVF), 79–99 (FKIM…ITVY), 110–130 (LTAA…STIE), 150–170 (MVYW…LLSW), 185–205 (LLAS…VLAL), 214–234 (FVPF…LELT), and 258–278 (IPIF…GAVF).

The protein belongs to the UPF0761 family.

The protein resides in the cell inner membrane. The chain is UPF0761 membrane protein CV_0810 from Chromobacterium violaceum (strain ATCC 12472 / DSM 30191 / JCM 1249 / CCUG 213 / NBRC 12614 / NCIMB 9131 / NCTC 9757 / MK).